The following is a 477-amino-acid chain: Argininosuccinate lyase (477 aa).

The protein belongs to the lyase 1 family. Argininosuccinate lyase subfamily.

Its subcellular location is the cytoplasm. It carries out the reaction 2-(N(omega)-L-arginino)succinate = fumarate + L-arginine. The protein operates within amino-acid biosynthesis; L-arginine biosynthesis; L-arginine from L-ornithine and carbamoyl phosphate: step 3/3. The polypeptide is Argininosuccinate lyase (Streptomyces avermitilis (strain ATCC 31267 / DSM 46492 / JCM 5070 / NBRC 14893 / NCIMB 12804 / NRRL 8165 / MA-4680)).